We begin with the raw amino-acid sequence, 558 residues long: Scarecrow-like protein 6 (558 aa).

Positions 19 to 90 (FSSSFPQPPS…GGDATTDEQC (72 aa)) are disordered. Low complexity predominate over residues 54 to 75 (SVLDSLISPTSSSTVSSSHGGN). One can recognise a GRAS domain in the interval 196-554 (KRLNPGPVGI…TELVGVSAWR (359 aa)). The tract at residues 203 to 257 (VGITEQLVKAAEVIESDTCLAQGILARLNQQLSSPVGKPLERAAFYFKEALNNLL) is leucine repeat I (LRI). The segment at 276–340 (YKSFSEISPV…DNAAPLSLKI (65 aa)) is VHIID. The VHIID motif lies at 307 to 311 (LHIID). Residues 356–388 (FTQDNLKHFASEINISLDIQVLSLDLLGSISWP) form a leucine repeat II (LRII) region. The segment at 396 to 479 (VAVNISAASF…RFLIQPEIEK (84 aa)) is PFYRE. Residues 482–554 (LDRSRPIERP…TELVGVSAWR (73 aa)) are SAW.

This sequence belongs to the GRAS family. Interacts with Meloidogyne incognita 16D10. As to expression, expressed in seedlings, roots, leaves, flowers and siliques.

It is found in the nucleus. Probable transcription factor involved in plant development. The protein is Scarecrow-like protein 6 (SCL6) of Arabidopsis thaliana (Mouse-ear cress).